The chain runs to 394 residues: Phosphoglycerate kinase (394 aa).

Substrate contacts are provided by residues Asp21–Asn23, Arg36, His59–Arg62, Arg118, and Arg151. Position 183 is a phosphoserine (Ser183). Lys201 is an ATP binding site. Thr299 carries the phosphothreonine modification. ATP is bound by residues Glu323 and Gly350 to Ser353.

The protein belongs to the phosphoglycerate kinase family. Monomer.

The protein localises to the cytoplasm. The enzyme catalyses (2R)-3-phosphoglycerate + ATP = (2R)-3-phospho-glyceroyl phosphate + ADP. It functions in the pathway carbohydrate degradation; glycolysis; pyruvate from D-glyceraldehyde 3-phosphate: step 2/5. This Bacillus pumilus (strain SAFR-032) protein is Phosphoglycerate kinase.